The following is a 1463-amino-acid chain: Gag-Pol polyprotein (1463 aa).

The N-myristoyl glycine; by host moiety is linked to residue glycine 2. Residues 7-31 (VLRGKKADELEKIRLRPGGKKKYRL) are interaction with Gp41. A Nuclear export signal motif is present at residues 16–22 (LEKIRLR). The Nuclear localization signal motif lies at 26–32 (KKKYRLK). The interval 112-138 (TKTTEKMPSTSRPTAPPSGNGGNFPVQ) is disordered. An interaction with human PPIA/CYPA and NUP153 region spans residues 191–228 (NCVGDHQAAMQIIREIINEEAADWDAQHPIPGPLPAGQ). Residues 279-365 (YNPTNILDIK…GGPGQKARLM (87 aa)) are dimerization/Multimerization of capsid protein p24. 2 CCHC-type zinc fingers span residues 389–406 (IKCWNCGKEGHSARQCRA) and 410–427 (QGCWKCGKAGHIMAKCPE). Residues 441 to 508 (EAPQFPCGPN…TRDTMQRDDR (68 aa)) are disordered. Residues 462–508 (RPSRGPTREVHAAREKAERAEREAIQRSDRGLPAARETRDTMQRDDR) are compositionally biased toward basic and acidic residues. Positions 513–517 (PQFSL) are dimerization of protease. One can recognise a Peptidase A2 domain in the interval 532–601 (VEVLLDTGAD…TPINIFGRNI (70 aa)). Aspartate 537 functions as the For protease activity; shared with dimeric partner in the catalytic mechanism. Dimerization of protease stretches follow at residues 561 to 567 (GIGGFIN) and 600 to 612 (NILTALGMSLNLP). The region spanning 655 to 845 (EGQLEEAPPT…PPYQWMGYEL (191 aa)) is the Reverse transcriptase domain. Residues aspartate 721, aspartate 796, and aspartate 797 each contribute to the Mg(2+) site. An RT 'primer grip' region spans residues 838 to 846 (YQWMGYELW). A Tryptophan repeat motif motif is present at residues 1008–1024 (WEQWWDNYWQVTWIPDW). Residues 1044–1167 (ILGAETFYTD…VDHLVSQGIR (124 aa)) form the RNase H type-1 domain. The Mg(2+) site is built by aspartate 1053, glutamate 1088, aspartate 1108, and aspartate 1159. The Integrase-type zinc-finger motif lies at 1173 to 1214 (EKIEPAQEEHEKYHSNVKELSHKFGLPKLVARQIVNTCTQCQ). Residues histidine 1182, histidine 1186, cysteine 1210, and cysteine 1213 each coordinate Zn(2+). One can recognise an Integrase catalytic domain in the interval 1223 to 1374 (QVNAELGTWQ…TPAERLINMV (152 aa)). Residues aspartate 1234, aspartate 1286, and glutamate 1322 each contribute to the Mg(2+) site. A DNA-binding region (integrase-type) is located at residues 1393–1440 (FRVYFREGRDQLWKGPGELLWKGDGAVIVKVGADIKIIPRRKAKIIKD).

Homotrimer; further assembles as hexamers of trimers. Interacts with gp41 (via C-terminus). Interacts with host CALM1; this interaction induces a conformational change in the Matrix protein, triggering exposure of the myristate group. Interacts with host AP3D1; this interaction allows the polyprotein trafficking to multivesicular bodies during virus assembly. Part of the pre-integration complex (PIC) which is composed of viral genome, matrix protein, Vpr and integrase. As to quaternary structure, homodimer; the homodimer further multimerizes as homohexamers or homopentamers. Interacts with human PPIA/CYPA. Interacts with human NUP153. Interacts with host PDZD8; this interaction stabilizes the capsid. Interacts with monkey TRIM5; this interaction destabilizes the capsid. In terms of assembly, homodimer, whose active site consists of two apposed aspartic acid residues. Heterodimer of p66 RT and p51 RT (RT p66/p51). Heterodimerization of RT is essential for DNA polymerase activity. The overall folding of the subdomains is similar in p66 RT and p51 RT but the spatial arrangements of the subdomains are dramatically different. As to quaternary structure, homotetramer; may further associate as a homohexadecamer. Part of the pre-integration complex (PIC) which is composed of viral genome, matrix protein, Vpr and integrase. Interacts with human SMARCB1/INI1 and human PSIP1/LEDGF isoform 1. Interacts with human KPNA3; this interaction might play a role in nuclear import of the pre-integration complex. Interacts with human NUP153; this interaction might play a role in nuclear import of the pre-integration complex. It depends on Mg(2+) as a cofactor. Post-translationally, specific enzymatic cleavages by the viral protease yield mature proteins. The protease is released by autocatalytic cleavage. The polyprotein is cleaved during and after budding, this process is termed maturation. Proteolytic cleavage of p66 RT removes the RNase H domain to yield the p51 RT subunit. Nucleocapsid protein p7 might be further cleaved after virus entry.

The protein resides in the host cell membrane. The protein localises to the host endosome. It localises to the host multivesicular body. It is found in the virion membrane. Its subcellular location is the host nucleus. The protein resides in the host cytoplasm. The protein localises to the virion. The enzyme catalyses Endopeptidase for which the P1 residue is preferably hydrophobic.. It catalyses the reaction Endohydrolysis of RNA in RNA/DNA hybrids. Three different cleavage modes: 1. sequence-specific internal cleavage of RNA. Human immunodeficiency virus type 1 and Moloney murine leukemia virus enzymes prefer to cleave the RNA strand one nucleotide away from the RNA-DNA junction. 2. RNA 5'-end directed cleavage 13-19 nucleotides from the RNA end. 3. DNA 3'-end directed cleavage 15-20 nucleotides away from the primer terminus.. The catalysed reaction is 3'-end directed exonucleolytic cleavage of viral RNA-DNA hybrid.. It carries out the reaction DNA(n) + a 2'-deoxyribonucleoside 5'-triphosphate = DNA(n+1) + diphosphate. Its activity is regulated as follows. Protease: The viral protease is inhibited by many synthetic protease inhibitors (PIs), such as amprenavir, atazanavir, indinavir, loprinavir, nelfinavir, ritonavir and saquinavir. Use of protease inhibitors in tritherapy regimens permit more ambitious therapeutic strategies. Reverse transcriptase/ribonuclease H: RT can be inhibited either by nucleoside RT inhibitors (NRTIs) or by non nucleoside RT inhibitors (NNRTIs). NRTIs act as chain terminators, whereas NNRTIs inhibit DNA polymerization by binding a small hydrophobic pocket near the RT active site and inducing an allosteric change in this region. Classical NRTIs are abacavir, adefovir (PMEA), didanosine (ddI), lamivudine (3TC), stavudine (d4T), tenofovir (PMPA), zalcitabine (ddC), and zidovudine (AZT). Classical NNRTIs are atevirdine (BHAP U-87201E), delavirdine, efavirenz (DMP-266), emivirine (I-EBU), and nevirapine (BI-RG-587). The tritherapies used as a basic effective treatment of AIDS associate two NRTIs and one NNRTI. Functionally, mediates, with Gag polyprotein, the essential events in virion assembly, including binding the plasma membrane, making the protein-protein interactions necessary to create spherical particles, recruiting the viral Env proteins, and packaging the genomic RNA via direct interactions with the RNA packaging sequence (Psi). Gag-Pol polyprotein may regulate its own translation, by the binding genomic RNA in the 5'-UTR. At low concentration, the polyprotein would promote translation, whereas at high concentration, the polyprotein would encapsidate genomic RNA and then shut off translation. In terms of biological role, targets the polyprotein to the plasma membrane via a multipartite membrane-binding signal, that includes its myristoylated N-terminus. Matrix protein is part of the pre-integration complex. Implicated in the release from host cell mediated by Vpu. Binds to RNA. Forms the conical core that encapsulates the genomic RNA-nucleocapsid complex in the virion. Most core are conical, with only 7% tubular. The core is constituted by capsid protein hexamer subunits. The core is disassembled soon after virion entry. Host restriction factors such as TRIM5-alpha or TRIMCyp bind retroviral capsids and cause premature capsid disassembly, leading to blocks in reverse transcription. Capsid restriction by TRIM5 is one of the factors which restricts HIV-1 to the human species. Host PIN1 apparently facilitates the virion uncoating. On the other hand, interactions with PDZD8 or CYPA stabilize the capsid. Its function is as follows. Encapsulates and protects viral dimeric unspliced genomic RNA (gRNA). Binds these RNAs through its zinc fingers. Acts as a nucleic acid chaperone which is involved in rearangement of nucleic acid secondary structure during gRNA retrotranscription. Also facilitates template switch leading to recombination. As part of the polyprotein, participates in gRNA dimerization, packaging, tRNA incorporation and virion assembly. Functionally, aspartyl protease that mediates proteolytic cleavages of Gag and Gag-Pol polyproteins during or shortly after the release of the virion from the plasma membrane. Cleavages take place as an ordered, step-wise cascade to yield mature proteins. This process is called maturation. Displays maximal activity during the budding process just prior to particle release from the cell. Also cleaves Nef and Vif, probably concomitantly with viral structural proteins on maturation of virus particles. Hydrolyzes host EIF4GI and PABP1 in order to shut off the capped cellular mRNA translation. The resulting inhibition of cellular protein synthesis serves to ensure maximal viral gene expression and to evade host immune response. In terms of biological role, multifunctional enzyme that converts the viral RNA genome into dsDNA in the cytoplasm, shortly after virus entry into the cell. This enzyme displays a DNA polymerase activity that can copy either DNA or RNA templates, and a ribonuclease H (RNase H) activity that cleaves the RNA strand of RNA-DNA heteroduplexes in a partially processive 3' to 5' endonucleasic mode. Conversion of viral genomic RNA into dsDNA requires many steps. A tRNA(3)-Lys binds to the primer-binding site (PBS) situated at the 5'-end of the viral RNA. RT uses the 3' end of the tRNA primer to perform a short round of RNA-dependent minus-strand DNA synthesis. The reading proceeds through the U5 region and ends after the repeated (R) region which is present at both ends of viral RNA. The portion of the RNA-DNA heteroduplex is digested by the RNase H, resulting in a ssDNA product attached to the tRNA primer. This ssDNA/tRNA hybridizes with the identical R region situated at the 3' end of viral RNA. This template exchange, known as minus-strand DNA strong stop transfer, can be either intra- or intermolecular. RT uses the 3' end of this newly synthesized short ssDNA to perform the RNA-dependent minus-strand DNA synthesis of the whole template. RNase H digests the RNA template except for two polypurine tracts (PPTs) situated at the 5'-end and near the center of the genome. It is not clear if both polymerase and RNase H activities are simultaneous. RNase H probably can proceed both in a polymerase-dependent (RNA cut into small fragments by the same RT performing DNA synthesis) and a polymerase-independent mode (cleavage of remaining RNA fragments by free RTs). Secondly, RT performs DNA-directed plus-strand DNA synthesis using the PPTs that have not been removed by RNase H as primers. PPTs and tRNA primers are then removed by RNase H. The 3' and 5' ssDNA PBS regions hybridize to form a circular dsDNA intermediate. Strand displacement synthesis by RT to the PBS and PPT ends produces a blunt ended, linear dsDNA copy of the viral genome that includes long terminal repeats (LTRs) at both ends. Catalyzes viral DNA integration into the host chromosome, by performing a series of DNA cutting and joining reactions. This enzyme activity takes place after virion entry into a cell and reverse transcription of the RNA genome in dsDNA. The first step in the integration process is 3' processing. This step requires a complex comprising the viral genome, matrix protein, Vpr and integrase. This complex is called the pre-integration complex (PIC). The integrase protein removes 2 nucleotides from each 3' end of the viral DNA, leaving recessed CA OH's at the 3' ends. In the second step, the PIC enters cell nucleus. This process is mediated through integrase and Vpr proteins, and allows the virus to infect a non dividing cell. This ability to enter the nucleus is specific of lentiviruses, other retroviruses cannot and rely on cell division to access cell chromosomes. In the third step, termed strand transfer, the integrase protein joins the previously processed 3' ends to the 5' ends of strands of target cellular DNA at the site of integration. The 5'-ends are produced by integrase-catalyzed staggered cuts, 5 bp apart. A Y-shaped, gapped, recombination intermediate results, with the 5'-ends of the viral DNA strands and the 3' ends of target DNA strands remaining unjoined, flanking a gap of 5 bp. The last step is viral DNA integration into host chromosome. This involves host DNA repair synthesis in which the 5 bp gaps between the unjoined strands are filled in and then ligated. Since this process occurs at both cuts flanking the HIV genome, a 5 bp duplication of host DNA is produced at the ends of HIV-1 integration. Alternatively, Integrase may catalyze the excision of viral DNA just after strand transfer, this is termed disintegration. The polypeptide is Gag-Pol polyprotein (gag-pol) (Human immunodeficiency virus type 2 subtype A (isolate ST) (HIV-2)).